Here is an 875-residue protein sequence, read N- to C-terminus: Neurotrypsin (875 aa).

The N-terminal stretch at 1–20 is a signal peptide; the sequence is MTLARFVLALMLGALPEVVG. Asparagine 26 carries N-linked (GlcNAc...) asparagine glycosylation. The interval 29–88 is disordered; that stretch reads LHHSHRHSPPPGPHYPYYLPTQQRPPRTRPPPPLPRFPRPPRALPAQRPHALQAGHTPRP. The segment covering 43–53 has biased composition (low complexity); that stretch reads YPYYLPTQQRP. Positions 56-71 are enriched in pro residues; it reads TRPPPPLPRFPRPPRA. A Kringle domain is found at 93–165; sequence CPAGEPWVSV…GKVDWGYCDC (73 aa). Disulfide bonds link cysteine 93/cysteine 165, cysteine 109/cysteine 149, cysteine 138/cysteine 163, cysteine 195/cysteine 259, cysteine 208/cysteine 269, cysteine 239/cysteine 249, cysteine 305/cysteine 369, cysteine 318/cysteine 379, cysteine 349/cysteine 359, cysteine 412/cysteine 475, cysteine 425/cysteine 485, cysteine 455/cysteine 465, cysteine 525/cysteine 589, cysteine 538/cysteine 599, cysteine 569/cysteine 579, cysteine 619/cysteine 750, cysteine 661/cysteine 677, cysteine 765/cysteine 831, cysteine 794/cysteine 808, and cysteine 821/cysteine 850. SRCR domains are found at residues 170–271, 280–381, 387–487, and 500–601; these read VRLR…TCSF, IRLA…SCTP, IRLA…ACYP, and VRLV…ICDY. The tract at residues 619 to 630 is zymogen activation region; sequence CGLRLLHRRQKR. Residues 631-874 form the Peptidase S1 domain; it reads IIGGKNSLRG…FVPWIKSVTK (244 aa). Histidine 676 functions as the Charge relay system in the catalytic mechanism. N-linked (GlcNAc...) asparagine glycosylation occurs at asparagine 683. Residue aspartate 726 is the Charge relay system of the active site. The Charge relay system role is filled by serine 825.

It belongs to the peptidase S1 family.

It is found in the secreted. Its function is as follows. Plays a role in neuronal plasticity and the proteolytic action may subserve structural reorganizations associated with learning and memory operations. The polypeptide is Neurotrypsin (PRSS12) (Pan troglodytes (Chimpanzee)).